A 244-amino-acid chain; its full sequence is MSTSKRKRGDDANWSKRVPKKKPSSAGLKRAGSKADRPSLQIQTLQHAGTTMITVPSGGVCDLINTYARGSDEGNRHTSETLTYKIAVDYHFVADAAACRYSNTGTGVMWLVYDTTPGGQAPTPQTIFAYPDTLKAWPATWKVSRELCHRFVVKRRWLFNMETDGRIGSDIPPSNTSWKPCKRNIYFHKFTSGLGVRTQWKNVTDGGVGAIQRGALYMVIAPGNGLTFTAHGQTRLYFKSVGNQ.

Residues 1 to 24 (MSTSKRKRGDDANWSKRVPKKKPS) carry the Bipartite nuclear localization signal motif. Residues 1–39 (MSTSKRKRGDDANWSKRVPKKKPSSAGLKRAGSKADRPS) are disordered.

It belongs to the geminiviridae capsid protein family. Homomultimer. Interacts with the movement protein. Binds to single-stranded and double-stranded viral DNA.

Its subcellular location is the virion. It localises to the host nucleus. Encapsidates the viral genome into characteristic twinned ('geminate') particles. Binds the genomic viral ssDNA and shuttles it into and out of the cell nucleus. Plays a role in protection of the genome from degradation, virus acquisition and transmission by insect vectors, infectivity, and systemic movement. The CP of monopartite geminiviruses is absolutely essential for virus movement. The protein is Capsid protein of Avena sativa (Oat).